We begin with the raw amino-acid sequence, 563 residues long: MLEFAISAPLDTGAELLSDQVSANFPWLSLSILFPIVGAFLVPFIPDEGEGKQVRWFALGIALVTFLITVAAYLYGYDPSLSGLQLSERVSWLPDLGLTWAVGADGISMPLILLTSFITALAVLAAWPVTFKPKLFFFLILAMDGGQIAVFAVQDMLLFFLAWELELLPVYLLLAIWGGKKRQYAATKFIIYTAGSSLFILLVALAMGFFGGGTPNFEYTNLAQQSFGTGFQLLCYAGLLIAFGVKLPIVPLHTWLPDAHGEATAPVHMLLAGILLKMGGYALMRFNAQLLPEAHAQFAPLLIVLGVVNIIYAALTSFAQRNLKRKIAYSSISHMGFVLIGIGSFSALGTSGAMLQMISHGLIGASLFFLVGATYDRTHTLQLEEMGGVGQKMRIMFALWTVCALASLALPGMSGFVSELMVFVGFATDEAYTLTFRIVIAGLAAIGVILTPIYLLSMLREIFFGKENDQLVSHTNLVDAEPREVYIISCLLVPIIGIGLYPRLMTDSYTASIQELVKRDDLALQRIKKPSALMIRNTTMTPAVVSSPRLPITQTRSEQLTRK.

15 helical membrane-spanning segments follow: residues 25 to 45 (FPWL…VPFI), 56 to 76 (WFAL…YLYG), 90 to 110 (VSWL…ISMP), 111 to 131 (LILL…PVTF), 133 to 153 (PKLF…VFAV), 157 to 177 (LLFF…LAIW), 189 to 209 (FIIY…AMGF), 230 to 250 (GFQL…LPIV), 264 to 284 (TAPV…YALM), 298 to 318 (FAPL…LTSF), 335 to 355 (MGFV…GAML), 356 to 376 (QMIS…ATYD), 397 to 417 (FALW…SGFV), 438 to 458 (IVIA…LLSM), and 485 to 505 (VYII…PRLM).

This sequence belongs to the complex I subunit 4 family.

It localises to the cellular thylakoid membrane. It catalyses the reaction a plastoquinone + NADH + (n+1) H(+)(in) = a plastoquinol + NAD(+) + n H(+)(out). The catalysed reaction is a plastoquinone + NADPH + (n+1) H(+)(in) = a plastoquinol + NADP(+) + n H(+)(out). In terms of biological role, NDH-1 shuttles electrons from NAD(P)H, via FMN and iron-sulfur (Fe-S) centers, to quinones in the respiratory chain. The immediate electron acceptor for the enzyme in this species is believed to be plastoquinone. Couples the redox reaction to proton translocation (for every two electrons transferred, four hydrogen ions are translocated across the cytoplasmic membrane), and thus conserves the redox energy in a proton gradient. This is NAD(P)H-quinone oxidoreductase chain 4 from Prochlorococcus marinus (strain MIT 9313).